The primary structure comprises 60 residues: Metallothionein A (60 aa).

The tract at residues 1 to 28 (MDPCQCSKSGTCNCGGSCTCTNCSCKSC) is beta. Residues Cys4, Cys6, Cys12, Cys14, Cys18, Cys20, Cys23, Cys25, Cys28, Cys32, Cys33, Cys35, Cys36, Cys40, Cys43, Cys47, Cys49, Cys54, Cys58, and Cys59 each coordinate a divalent metal cation. Positions 29–60 (KKSCCPCCPSGCTKCASGCVCKGKTCDTSCCQ) are alpha.

Belongs to the metallothionein superfamily. Type 1 family.

Functionally, metallothioneins have a high content of cysteine residues that bind various heavy metals. The chain is Metallothionein A (mta) from Trematomus bernacchii (Emerald rockcod).